The chain runs to 363 residues: p21-activated protein kinase-interacting protein 1-like (363 aa).

WD repeat units lie at residues 38-75 (AHTA…EHGA), 78-116 (HHNG…CQQT), 119-158 (AHKG…SAFI), 200-238 (NNPK…CVCE), and 241-282 (AHEN…VQTS). The interval 309-363 (KEKSNTAVTASAVKDCDRPKKKKAQNETTDKEASETQVVHKKRKPETKQKKKKPS) is disordered. Residues 322–342 (KDCDRPKKKKAQNETTDKEAS) are compositionally biased toward basic and acidic residues. A compositionally biased stretch (basic residues) spans 347–363 (VHKKRKPETKQKKKKPS).

The protein resides in the nucleus. Its subcellular location is the nucleolus. Functionally, negatively regulates the PAK1 kinase. PAK1 is a member of the PAK kinase family, which has been shown to play a positive role in the regulation of signaling pathways involving MAPK8 and RELA. PAK1 exists as an inactive homodimer, which is activated by binding of small GTPases such as CDC42 to an N-terminal regulatory domain. PAK1IP1 also binds to the N-terminus of PAK1, and inhibits the specific activation of PAK1 by CDC42. May be involved in ribosomal large subunit assembly. This chain is p21-activated protein kinase-interacting protein 1-like (pak1ip1), found in Xenopus laevis (African clawed frog).